An 858-amino-acid polypeptide reads, in one-letter code: Ubiquitin carboxyl-terminal hydrolase 5 (858 aa).

Ala-2 bears the N-acetylalanine mark. A disordered region spans residues 74-96; that stretch reads RRTRRPKEEDPTTGTGDPPRKKP. A Glycyl lysine isopeptide (Lys-Gly) (interchain with G-Cter in SUMO) cross-link involves residue Lys-113. Phosphoserine is present on residues Ser-149 and Ser-156. The UBP-type; degenerate zinc-finger motif lies at 175–283; the sequence is QVSKHAFSLK…EHLSHFGIDM (109 aa). Cys-195 and Cys-816 are oxidised to a cystine. Zn(2+)-binding residues include Cys-199 and Cys-202. Substrate is bound at residue Trp-209. A Zn(2+)-binding site is contributed by Cys-219. Position 221–224 (221–224) interacts with substrate; the sequence is RRYF. Position 232 (His-232) interacts with Zn(2+). Substrate contacts are provided by Tyr-259, Tyr-261, and Asp-264. Phosphothreonine is present on Thr-292. The 531-residue stretch at 326–856 folds into the USP domain; sequence TGIRNLGNSC…LGYIYFYQRV (531 aa). The active-site Nucleophile is Cys-335. Thr-623 bears the Phosphothreonine mark. UBA domains are found at residues 654-695 and 722-762; these read MLDE…VMSH and PPPE…IFSH. 3 positions are modified to phosphoserine: Ser-779, Ser-783, and Ser-785. His-818 acts as the Proton acceptor in catalysis.

The protein belongs to the peptidase C19 family. In terms of assembly, homodimer. Interacts with TRIML1. In terms of processing, ubiquitinated by SMURF1; leading to proteasomal degradation. SUMOylated at Lys-113; SUMOylation affects the interaction with Cav3.2 channels.

Its subcellular location is the cytoplasm. It localises to the stress granule. It is found in the nucleus. The catalysed reaction is Thiol-dependent hydrolysis of ester, thioester, amide, peptide and isopeptide bonds formed by the C-terminal Gly of ubiquitin (a 76-residue protein attached to proteins as an intracellular targeting signal).. In terms of biological role, deubiquitinating enzyme that participates in a wide range of cellular processes by specifically cleaving isopeptide bonds between ubiquitin and substrate proteins or ubiquitin itself. Affects thereby important cellular signaling pathways such as NF-kappa-B, Wnt/beta-catenin, and cytokine production by regulating ubiquitin-dependent protein degradation. Participates in the activation of the Wnt signaling pathway by promoting FOXM1 deubiquitination and stabilization that induces the recruitment of beta-catenin to Wnt target gene promoter. Regulates the assembly and disassembly of heat-induced stress granules by mediating the hydrolysis of unanchored ubiquitin chains. Promotes lipopolysaccharide-induced apoptosis and inflammatory response by stabilizing the TXNIP protein. Affects T-cell biology by stabilizing the inhibitory receptor on T-cells PDC1. Acts as a negative regulator of autophagy by regulating ULK1 at both protein and mRNA levels. Acts also as a negative regulator of type I interferon production by simultaneously removing both 'Lys-48'-linked unanchored and 'Lys-63'-linked anchored polyubiquitin chains on the transcription factor IRF3. Modulates the stability of DNA mismatch repair protein MLH1 and counteracts the effect of the ubiquitin ligase UBR4. Upon activation by insulin, it gets phosphorylated through mTORC1-mediated phosphorylation to enhance YTHDF1 stability by removing 'Lys-11'-linked polyubiquitination. May also deubiquitinate other substrates such as the calcium channel CACNA1H. This is Ubiquitin carboxyl-terminal hydrolase 5 (UBP5) from Pongo abelii (Sumatran orangutan).